The following is a 34-amino-acid chain: MVNWQVIGQLVSTGLIGLLGPAVIILLALKKGNL.

The chain crosses the membrane as a helical span at residues 6-26; sequence VIGQLVSTGLIGLLGPAVIIL.

This sequence belongs to the Psb30/Ycf12 family. In terms of assembly, PSII is composed of 1 copy each of membrane proteins PsbA, PsbB, PsbC, PsbD, PsbE, PsbF, PsbH, PsbI, PsbJ, PsbK, PsbL, PsbM, PsbT, PsbX, PsbY, PsbZ, Psb30/Ycf12, peripheral proteins of the oxygen-evolving complex and a large number of cofactors. It forms dimeric complexes.

It localises to the plastid. The protein resides in the chloroplast thylakoid membrane. Its function is as follows. A core subunit of photosystem II (PSII), probably helps stabilize the reaction center. This Skeletonema costatum (Marine centric diatom) protein is Photosystem II reaction center protein Psb30.